Consider the following 340-residue polypeptide: Photosystem II assembly lipoprotein Ycf48 (340 aa).

The N-terminal stretch at 1-26 is a signal peptide; that stretch reads MTSVLGLLKPLKKAIAAIAVLVLCIG. C27 carries N-palmitoyl cysteine lipidation. A lipid anchor (S-diacylglycerol cysteine) is attached at C27.

It belongs to the Ycf48 family. Part of early PSII assembly complexes which includes D1 (psbA) and PsbI; not found in mature PSII. Binds to the lumenal side of PSII complexes. Interacts with YidC.

It localises to the cellular thylakoid membrane. Functionally, a factor required for optimal assembly of photosystem II (PSII), acting in the early stages of PSII assembly. Also plays a role in replacement of photodamaged D1 (psbA). Assists YidC in synthesis of chlorophyll-binding proteins. This chain is Photosystem II assembly lipoprotein Ycf48, found in Picosynechococcus sp. (strain ATCC 27264 / PCC 7002 / PR-6) (Agmenellum quadruplicatum).